Reading from the N-terminus, the 222-residue chain is Glutathione S-transferase 3 (222 aa).

The GST N-terminal domain maps to Ala-2 to Gly-83. Glutathione is bound by residues Ser-12, Pro-13–Asn-14, His-41–Lys-42, Gln-54–Ile-55, and Glu-67–Ser-68. The GST C-terminal domain maps to Ala-89 to Ser-219.

Belongs to the GST superfamily. Phi family. As to quaternary structure, homodimer.

The enzyme catalyses RX + glutathione = an S-substituted glutathione + a halide anion + H(+). Its function is as follows. Conjugation of reduced glutathione to a wide number of exogenous and endogenous hydrophobic electrophiles. Involved in the detoxification of certain herbicides. The polypeptide is Glutathione S-transferase 3 (Zea mays (Maize)).